The primary structure comprises 179 residues: ATP synthase subunit delta (179 aa).

It belongs to the ATPase delta chain family. F-type ATPases have 2 components, F(1) - the catalytic core - and F(0) - the membrane proton channel. F(1) has five subunits: alpha(3), beta(3), gamma(1), delta(1), epsilon(1). F(0) has three main subunits: a(1), b(2) and c(10-14). The alpha and beta chains form an alternating ring which encloses part of the gamma chain. F(1) is attached to F(0) by a central stalk formed by the gamma and epsilon chains, while a peripheral stalk is formed by the delta and b chains.

Its subcellular location is the cell inner membrane. Functionally, f(1)F(0) ATP synthase produces ATP from ADP in the presence of a proton or sodium gradient. F-type ATPases consist of two structural domains, F(1) containing the extramembraneous catalytic core and F(0) containing the membrane proton channel, linked together by a central stalk and a peripheral stalk. During catalysis, ATP synthesis in the catalytic domain of F(1) is coupled via a rotary mechanism of the central stalk subunits to proton translocation. This protein is part of the stalk that links CF(0) to CF(1). It either transmits conformational changes from CF(0) to CF(1) or is implicated in proton conduction. The chain is ATP synthase subunit delta from Acidithiobacillus ferrooxidans (strain ATCC 23270 / DSM 14882 / CIP 104768 / NCIMB 8455) (Ferrobacillus ferrooxidans (strain ATCC 23270)).